A 342-amino-acid polypeptide reads, in one-letter code: Dihydroorotase (342 aa).

2 residues coordinate Zn(2+): histidine 13 and histidine 15. Residues 15-17 and asparagine 41 contribute to the substrate site; that span reads HLR. Zn(2+)-binding residues include lysine 98, histidine 135, and histidine 173. Position 98 is an N6-carboxylysine (lysine 98). Histidine 135 provides a ligand contact to substrate. Residue leucine 218 coordinates substrate. Aspartate 246 contacts Zn(2+). Aspartate 246 is an active-site residue. Histidine 250 and alanine 262 together coordinate substrate.

The protein belongs to the metallo-dependent hydrolases superfamily. DHOase family. Class II DHOase subfamily. Homodimer. Zn(2+) is required as a cofactor.

It carries out the reaction (S)-dihydroorotate + H2O = N-carbamoyl-L-aspartate + H(+). The protein operates within pyrimidine metabolism; UMP biosynthesis via de novo pathway; (S)-dihydroorotate from bicarbonate: step 3/3. Its function is as follows. Catalyzes the reversible cyclization of carbamoyl aspartate to dihydroorotate. This chain is Dihydroorotase, found in Aliivibrio salmonicida (strain LFI1238) (Vibrio salmonicida (strain LFI1238)).